Here is a 150-residue protein sequence, read N- to C-terminus: Protein Turandot X1/X2 (150 aa).

The signal sequence occupies residues 1–22; that stretch reads MRLYIGSLLICVLLGIVPFATA. The segment at 127 to 150 is disordered; it reads REEGQSNHANSPTTSPSRIQKMTK. A compositionally biased stretch (polar residues) spans 132–150; it reads SNHANSPTTSPSRIQKMTK.

It belongs to the Turandot family.

Its subcellular location is the secreted. A humoral factor that may play a role in stress tolerance. The chain is Protein Turandot X1/X2 from Drosophila sechellia (Fruit fly).